Consider the following 811-residue polypeptide: Phenylalanine--tRNA ligase beta subunit (811 aa).

The tRNA-binding domain occupies Ala40–Asp156. The 76-residue stretch at Lys411–Tyr486 folds into the B5 domain. Mg(2+)-binding residues include Asp464, Asp470, Glu473, and Glu474. An FDX-ACB domain is found at Pro717–Arg810.

Belongs to the phenylalanyl-tRNA synthetase beta subunit family. Type 1 subfamily. In terms of assembly, tetramer of two alpha and two beta subunits. The cofactor is Mg(2+).

The protein localises to the cytoplasm. It carries out the reaction tRNA(Phe) + L-phenylalanine + ATP = L-phenylalanyl-tRNA(Phe) + AMP + diphosphate + H(+). This Oceanobacillus iheyensis (strain DSM 14371 / CIP 107618 / JCM 11309 / KCTC 3954 / HTE831) protein is Phenylalanine--tRNA ligase beta subunit.